The chain runs to 317 residues: Ornithine carbamoyltransferase (317 aa).

Carbamoyl phosphate-binding positions include 54–57, Gln81, Arg105, and 132–135; these read STRT and HPCQ. Residues Asn163, Asp227, and 231–232 contribute to the L-ornithine site; that span reads SM. Carbamoyl phosphate contacts are provided by residues 267-268 and Arg295; that span reads CL.

This sequence belongs to the aspartate/ornithine carbamoyltransferase superfamily. OTCase family.

It localises to the cytoplasm. It catalyses the reaction carbamoyl phosphate + L-ornithine = L-citrulline + phosphate + H(+). The protein operates within amino-acid biosynthesis; L-arginine biosynthesis; L-arginine from L-ornithine and carbamoyl phosphate: step 1/3. Its function is as follows. Reversibly catalyzes the transfer of the carbamoyl group from carbamoyl phosphate (CP) to the N(epsilon) atom of ornithine (ORN) to produce L-citrulline. This is Ornithine carbamoyltransferase from Parafrankia sp. (strain EAN1pec).